We begin with the raw amino-acid sequence, 286 residues long: 4-hydroxybenzoate octaprenyltransferase (286 aa).

7 helical membrane-spanning segments follow: residues Gly21–Met40, Leu96–Val116, Phe142–Val162, Trp167–Val187, Gln210–Ala230, Leu235–Phe255, and Phe266–Phe286.

It belongs to the UbiA prenyltransferase family. It depends on Mg(2+) as a cofactor.

Its subcellular location is the cell inner membrane. It catalyses the reaction all-trans-octaprenyl diphosphate + 4-hydroxybenzoate = 4-hydroxy-3-(all-trans-octaprenyl)benzoate + diphosphate. It participates in cofactor biosynthesis; ubiquinone biosynthesis. Functionally, catalyzes the prenylation of para-hydroxybenzoate (PHB) with an all-trans polyprenyl group. Mediates the second step in the final reaction sequence of ubiquinone-8 (UQ-8) biosynthesis, which is the condensation of the polyisoprenoid side chain with PHB, generating the first membrane-bound Q intermediate 3-octaprenyl-4-hydroxybenzoate. This Shewanella sp. (strain ANA-3) protein is 4-hydroxybenzoate octaprenyltransferase.